Reading from the N-terminus, the 751-residue chain is ATP-dependent DNA helicase Hel308 (751 aa).

ATP-binding positions include glutamine 20 and 39-46 (IPTASGKT). Residues 26 to 196 (EGLLDKSKNF…WLNAKLVTDE (171 aa)) form the Helicase ATP-binding domain. The DEAH box motif lies at 143 to 146 (DEIH). Residues 235–435 (NLTDLIVDSV…VLRVHILGLI (201 aa)) form the Helicase C-terminal domain.

It belongs to the helicase family. Hel308 subfamily. Monomer.

It catalyses the reaction Couples ATP hydrolysis with the unwinding of duplex DNA by translocating in the 3'-5' direction.. The enzyme catalyses ATP + H2O = ADP + phosphate + H(+). In terms of biological role, DNA-dependent ATPase and 3'-5' DNA helicase that may be involved in repair of stalled replication forks. The chain is ATP-dependent DNA helicase Hel308 from Methanococcus vannielii (strain ATCC 35089 / DSM 1224 / JCM 13029 / OCM 148 / SB).